Reading from the N-terminus, the 786-residue chain is Probable glutamine--tRNA ligase (786 aa).

Over residues 181–198 (DLAPKKKEKKPEGPKPSK) the composition is skewed to basic and acidic residues. The segment at 181 to 218 (DLAPKKKEKKPEGPKPSKDAAAAATAPGTKNQKEASPE) is disordered. The short motif at 276-286 (PEPNGVLHIGH) is the 'HIGH' region element. ATP-binding positions include 277 to 279 (EPN) and 283 to 289 (HIGHAKA). Residues D309 and Y444 each coordinate L-glutamine. Residues T463, 492–493 (RL), and 500–502 (VSK) each bind ATP. Positions 499-503 (VVSKR) match the 'KMSKS' region motif.

It belongs to the class-I aminoacyl-tRNA synthetase family.

It catalyses the reaction tRNA(Gln) + L-glutamine + ATP = L-glutaminyl-tRNA(Gln) + AMP + diphosphate. This chain is Probable glutamine--tRNA ligase, found in Caenorhabditis elegans.